A 283-amino-acid chain; its full sequence is Phosphatidylserine decarboxylase proenzyme (283 aa).

Active-site charge relay system; for autoendoproteolytic cleavage activity residues include Asp96, His152, and Ser250. Catalysis depends on Ser250, which acts as the Schiff-base intermediate with substrate; via pyruvic acid; for decarboxylase activity. A Pyruvic acid (Ser); by autocatalysis modification is found at Ser250.

Belongs to the phosphatidylserine decarboxylase family. PSD-B subfamily. Prokaryotic type I sub-subfamily. Heterodimer of a large membrane-associated beta subunit and a small pyruvoyl-containing alpha subunit. It depends on pyruvate as a cofactor. Is synthesized initially as an inactive proenzyme. Formation of the active enzyme involves a self-maturation process in which the active site pyruvoyl group is generated from an internal serine residue via an autocatalytic post-translational modification. Two non-identical subunits are generated from the proenzyme in this reaction, and the pyruvate is formed at the N-terminus of the alpha chain, which is derived from the carboxyl end of the proenzyme. The autoendoproteolytic cleavage occurs by a canonical serine protease mechanism, in which the side chain hydroxyl group of the serine supplies its oxygen atom to form the C-terminus of the beta chain, while the remainder of the serine residue undergoes an oxidative deamination to produce ammonia and the pyruvoyl prosthetic group on the alpha chain. During this reaction, the Ser that is part of the protease active site of the proenzyme becomes the pyruvoyl prosthetic group, which constitutes an essential element of the active site of the mature decarboxylase.

The protein localises to the cell membrane. The catalysed reaction is a 1,2-diacyl-sn-glycero-3-phospho-L-serine + H(+) = a 1,2-diacyl-sn-glycero-3-phosphoethanolamine + CO2. Its pathway is phospholipid metabolism; phosphatidylethanolamine biosynthesis; phosphatidylethanolamine from CDP-diacylglycerol: step 2/2. In terms of biological role, catalyzes the formation of phosphatidylethanolamine (PtdEtn) from phosphatidylserine (PtdSer). This Acinetobacter baumannii (strain SDF) protein is Phosphatidylserine decarboxylase proenzyme.